Consider the following 251-residue polypeptide: Developmental protein SEPALLATA 3 (251 aa).

One can recognise an MADS-box domain in the interval 3–57; sequence RGRVELKRIENKINRQVTFAKRRNGLLKKAYELSVLCDAEVALIIFSNRGKLYEF. The K-box domain occupies 91–181; sequence ELSSQQEYLK…RLRLADGYQM (91 aa). The stretch at 94 to 177 forms a coiled coil; it reads SQQEYLKLKE…NKTLRLRLAD (84 aa).

Forms homodimers. Heterodimer with AP1 or AG capable of binding to CArG-box sequences. Binds AP3/PI to form a ternary complex. Interacts with AGL16. Interacts with TT16/AGL32.

It is found in the nucleus. Probable transcription factor active in inflorescence development and floral organogenesis. Functions with SEPALLATA1/AGL2 and SEPALLATA2/AGL4 to ensure proper development of petals, stamens and carpels and to prevent the indeterminate growth of the flower meristem. Interacts with APETALA1, AGAMOUS or APETALA3/PISTILLATA to form complexes, that could be involved in genes regulation during floral meristem development. Binds specifically to the CArG box DNA sequence 5'-CC (A/T)6 GG-3'. The sequence is that of Developmental protein SEPALLATA 3 (SEP3) from Arabidopsis thaliana (Mouse-ear cress).